The sequence spans 375 residues: tRNA-specific 2-thiouridylase MnmA (375 aa).

Residues 12–19 and M38 contribute to the ATP site; that span reads GMSGGVDS. Residues 98-100 form an interaction with target base in tRNA region; the sequence is NPD. C103 serves as the catalytic Nucleophile. The cysteines at positions 103 and 200 are disulfide-linked. G127 provides a ligand contact to ATP. The segment at 150 to 152 is interaction with tRNA; it reads KDQ. The active-site Cysteine persulfide intermediate is C200. Positions 312–313 are interaction with tRNA; it reads RY.

The protein belongs to the MnmA/TRMU family.

It localises to the cytoplasm. The catalysed reaction is S-sulfanyl-L-cysteinyl-[protein] + uridine(34) in tRNA + AH2 + ATP = 2-thiouridine(34) in tRNA + L-cysteinyl-[protein] + A + AMP + diphosphate + H(+). Functionally, catalyzes the 2-thiolation of uridine at the wobble position (U34) of tRNA, leading to the formation of s(2)U34. In Levilactobacillus brevis (strain ATCC 367 / BCRC 12310 / CIP 105137 / JCM 1170 / LMG 11437 / NCIMB 947 / NCTC 947) (Lactobacillus brevis), this protein is tRNA-specific 2-thiouridylase MnmA.